A 108-amino-acid polypeptide reads, in one-letter code: Small ribosomal subunit protein uS17 (108 aa).

This sequence belongs to the universal ribosomal protein uS17 family. In terms of assembly, part of the 30S ribosomal subunit.

In terms of biological role, one of the primary rRNA binding proteins, it binds specifically to the 5'-end of 16S ribosomal RNA. The protein is Small ribosomal subunit protein uS17 of Methanoculleus marisnigri (strain ATCC 35101 / DSM 1498 / JR1).